The following is a 185-amino-acid chain: Peptide deformylase (185 aa).

Residues C109 and H152 each coordinate Fe cation. The active site involves E153. H156 contacts Fe cation.

This sequence belongs to the polypeptide deformylase family. The cofactor is Fe(2+).

The catalysed reaction is N-terminal N-formyl-L-methionyl-[peptide] + H2O = N-terminal L-methionyl-[peptide] + formate. Removes the formyl group from the N-terminal Met of newly synthesized proteins. Requires at least a dipeptide for an efficient rate of reaction. N-terminal L-methionine is a prerequisite for activity but the enzyme has broad specificity at other positions. The chain is Peptide deformylase from Roseiflexus castenholzii (strain DSM 13941 / HLO8).